The following is a 211-amino-acid chain: Large ribosomal subunit protein uL3 (211 aa).

The interval 130–154 (RGPMAHGSKFHRHQGSNGSATTPGR) is disordered.

This sequence belongs to the universal ribosomal protein uL3 family. As to quaternary structure, part of the 50S ribosomal subunit. Forms a cluster with proteins L14 and L19.

Functionally, one of the primary rRNA binding proteins, it binds directly near the 3'-end of the 23S rRNA, where it nucleates assembly of the 50S subunit. This chain is Large ribosomal subunit protein uL3, found in Lachnospira eligens (strain ATCC 27750 / DSM 3376 / VPI C15-48 / C15-B4) (Eubacterium eligens).